Consider the following 409-residue polypeptide: Putative protein disulfide-isomerase DDB_G0275025 (409 aa).

The N-terminal stretch at 1–21 is a signal peptide; sequence MKLINICIFIFAIICIESTFG. A Thioredoxin domain is found at 28 to 140; it reads NVINLTKKNF…AKFSLAKLPS (113 aa). An intrachain disulfide couples cysteine 57 to cysteine 60. Positions 245 to 273 are disordered; that stretch reads SNNDNNNNNNNNNNEESTKTTTTEKDPAS. A compositionally biased stretch (low complexity) spans 247-259; it reads NDNNNNNNNNNNE. Over residues 260-273 the composition is skewed to basic and acidic residues; sequence ESTKTTTTEKDPAS. The short motif at 406 to 409 is the Prevents secretion from ER element; that stretch reads KDEL.

This sequence belongs to the protein disulfide isomerase family.

Its subcellular location is the endoplasmic reticulum lumen. It carries out the reaction Catalyzes the rearrangement of -S-S- bonds in proteins.. This Dictyostelium discoideum (Social amoeba) protein is Putative protein disulfide-isomerase DDB_G0275025.